A 280-amino-acid polypeptide reads, in one-letter code: Diaminopimelate epimerase (280 aa).

3 residues coordinate substrate: asparagine 12, glutamine 45, and asparagine 65. The active-site Proton donor is the cysteine 74. Residues 75–76 (GN), asparagine 163, asparagine 196, and 214–215 (ER) contribute to the substrate site. The active-site Proton acceptor is the cysteine 223. 224–225 (GT) contributes to the substrate binding site.

Belongs to the diaminopimelate epimerase family. Homodimer.

The protein resides in the cytoplasm. It carries out the reaction (2S,6S)-2,6-diaminopimelate = meso-2,6-diaminopimelate. It participates in amino-acid biosynthesis; L-lysine biosynthesis via DAP pathway; DL-2,6-diaminopimelate from LL-2,6-diaminopimelate: step 1/1. Functionally, catalyzes the stereoinversion of LL-2,6-diaminopimelate (L,L-DAP) to meso-diaminopimelate (meso-DAP), a precursor of L-lysine and an essential component of the bacterial peptidoglycan. The sequence is that of Diaminopimelate epimerase from Shewanella sediminis (strain HAW-EB3).